Here is a 171-residue protein sequence, read N- to C-terminus: UPF0312 protein SAB2563 (171 aa).

It belongs to the UPF0312 family.

The polypeptide is UPF0312 protein SAB2563 (Staphylococcus aureus (strain bovine RF122 / ET3-1)).